The chain runs to 543 residues: Ipecoside beta-D-glucosidase IpeGLU1 (543 aa).

A beta-D-glucoside is bound by residues Gln-36, His-140, 185–186 (NE), Tyr-350, Glu-422, Trp-471, and Phe-487. The active-site Proton donor is Glu-186. The Nucleophile role is filled by Glu-422.

The protein belongs to the glycosyl hydrolase 1 family. Expressed in roots.

It is found in the cytoplasm. The protein localises to the cytosol. The enzyme catalyses deacetylipecoside + H2O = deacetylipecoside aglycone + D-glucose. The catalysed reaction is deacetylisoipecoside + H2O = deacetylisoipecoside aglycone + D-glucose. It catalyses the reaction 6-O-methyldeacetylipecoside + H2O = 6-O-methyldeacetylipecoside aglycone + D-glucose. It carries out the reaction 6-O-methyldeacetylisoipecoside + H2O = 6-O-methyldeacetylisoipecoside aglycone + D-glucose. The enzyme catalyses ipecoside + H2O = ipecoside aglycone + D-glucose. The catalysed reaction is 3alpha(S)-strictosidine + H2O = strictosidine aglycone + D-glucose. It functions in the pathway alkaloid biosynthesis. With respect to regulation, inhibited by Cu(2+), Fe(2+) and Zn(2+). Functionally, beta-glucosidase involved in the biosynthesis of ipecac and benzylisoquinoline monoterpenoid-isoquinoline alkaloids natural products, starting by the condensation of dopamine and secologanin, and including emetine and cephaeline, drugs used both as anti-protozoal (e.g. treatment of ameobiasis) and as emetic agents. In response to pathogen and herbivore attack, triggers the release of toxic ipecoside aglycon to trigger defense responses. Catalyzes deglucosylation both on (1S)-diastereomer and (1R)-diastereomer substrates, including ipecoside, the main alkaloidal glucoside. Also active on N-deacetylisoipecoside, 6-O-methyl-N-deacetylisoipecoside, 6-O-methyl-N-deacetylipecoside and N-deacetylipecoside. This is Ipecoside beta-D-glucosidase IpeGLU1 from Carapichea ipecacuanha (Ipecac).